A 310-amino-acid chain; its full sequence is B3 domain-containing transcription factor NGA1 (310 aa).

The segment at 1 to 26 (MMTDLSLTRDEDEEEAKPLAEEEGAR) is disordered. The span at 16–26 (AKPLAEEEGAR) shows a compositional bias: basic and acidic residues. The segment at residues 35–141 (FDKVVTPSDV…RLFIDWRRRP (107 aa)) is a DNA-binding region (TF-B3). Residues 251–268 (ESGMTNSTEEESSSSGGS) show a composition bias toward low complexity. Positions 251-310 (ESGMTNSTEEESSSSGGSLPRGGGGGASSSSFFQLRLGSSSEDDHFTKKGKSSLSFDLDQ) are disordered.

Interacts with BRX. Interacts with BZIP30.

It is found in the nucleus. Its function is as follows. Regulates lateral organ growth. Functionally redundant with NGA2, NGA3 and NGA4. This Arabidopsis thaliana (Mouse-ear cress) protein is B3 domain-containing transcription factor NGA1 (NGA1).